Here is a 729-residue protein sequence, read N- to C-terminus: 1,4-alpha-glucan branching enzyme GlgB 2 (729 aa).

D408 serves as the catalytic Nucleophile. The Proton donor role is filled by E461.

Belongs to the glycosyl hydrolase 13 family. GlgB subfamily. As to quaternary structure, monomer.

It catalyses the reaction Transfers a segment of a (1-&gt;4)-alpha-D-glucan chain to a primary hydroxy group in a similar glucan chain.. The protein operates within glycan biosynthesis; glycogen biosynthesis. Its function is as follows. Catalyzes the formation of the alpha-1,6-glucosidic linkages in glycogen by scission of a 1,4-alpha-linked oligosaccharide from growing alpha-1,4-glucan chains and the subsequent attachment of the oligosaccharide to the alpha-1,6 position. The polypeptide is 1,4-alpha-glucan branching enzyme GlgB 2 (Xanthomonas campestris pv. campestris (strain 8004)).